The primary structure comprises 114 residues: Evasin P1096 (114 aa).

An N-terminal signal peptide occupies residues 1–23; it reads MELNAFTILHIAVFIAVGYYANT. 3 disulfide bridges follow: cysteine 47–cysteine 65, cysteine 51–cysteine 67, and cysteine 61–cysteine 78. N-linked (GlcNAc...) asparagine glycosylation occurs at asparagine 50. A disordered region spans residues 89-114; it reads DPSQDPSIDEAAPRESVSKRRSNGES. Over residues 99–114 the composition is skewed to basic and acidic residues; it reads AAPRESVSKRRSNGES.

Its subcellular location is the secreted. Its function is as follows. Salivary chemokine-binding protein which binds to host chemokine CXCL8. The sequence is that of Evasin P1096 from Ixodes ricinus (Common tick).